Here is a 196-residue protein sequence, read N- to C-terminus: Probable malonic semialdehyde reductase RutE (196 aa).

The protein belongs to the nitroreductase family. HadB/RutE subfamily. FMN serves as cofactor.

The enzyme catalyses 3-hydroxypropanoate + NADP(+) = 3-oxopropanoate + NADPH + H(+). May reduce toxic product malonic semialdehyde to 3-hydroxypropionic acid, which is excreted. In Escherichia coli (strain SMS-3-5 / SECEC), this protein is Probable malonic semialdehyde reductase RutE.